A 1515-amino-acid chain; its full sequence is MTTELNQGEQFVADFRANAAALTTANAYNPEDEHDACGVGFIAAIDGKPRRSVVEKGIEALKAVWHRGAVDADGKTGDGAGIHVAVPQKFFKDHVKVIGHRAPDNKLAVGQVFLPRISLDAQEACRCIVETEILAFGYYIYGWRQVPINVDIIGEKANATRPEIEQIIVGNNKGVSDEQFELDLYIIRRRIEKAVKGEQINDFYICSLSARSIIYKGMFLAEQLTTFYPDLLDERFESDFAIYHQRYSTNTFPTWPLAQPFRMLAHNGEINTVKGNVNWMKAHETRMEHPAFGTHMQDLKPVIGVGLSDSGSLDTVFEVMVRAGRTAPMVKMMLVPQALTSSQTTPDNHKALIQYCNSVMEPWDGPAALAMTDGRWVVGGMDRNGLRPMRYTITTDGLIIGGSETGMVKIDETQVIEKGRLGPGEMIAVDLQSGKLYRDRELKDHLATLKPWDKWVQNTTHLDELVKTASLKGEPSDMDKAELRRRQQAFGLTMEDMELILHPMVEDGKEAIGSMGDDSPIAVLSDKYRGLHHFFRQNFSQVTNPPIDSLRERRVMSLKTRLGNLGNILDEDETQTRLLQLESPVLTTAEFRAMRDYMGDTAAEIDATFPVDGGPEALRDALRRIRQETEDAVRGGATHVILTDEAMGPARAAIPAILATGAVHTHLIRSNLRTFTSLNVRTAEGLDTHYFAVLIGVGATTVNAYLAQEAIAERHRRGLFGSMPLEKGMANYKKAIDDGLLKIMSKMGISVISSYRGGGNFEAIGLSRALVAEHFPAMVSRISGIGLNGIQKKVLEQHATAYNEEVVALPVGGFYRFRKSGDRHGWEGGVIHTLQQAVTNDSYTTFKKYSEQVNKRPPMQLRDLLELRSTKAPVPVDEVESITAIRKRFITPGMSMGALSPEAHGTLNVAMNRIGAKSDSGEGGEDPARFRPDKNGDNWNSAIKQVASGRFGVTAEYLNQCRELEIKVAQGAKPGEGGQLPGFKVTEMIARLRHSTPGVMLISPPPHHDIYSIEDLAQLIYDLKQINPDAKVTVKLVSRSGIGTIAAGVAKANADIILISGNSGGTGASPQTSIKFAGLPWEMGLSEVHQVLTLNRLRHRVRLRTDGGLKTGRDIVIAAMLGAEEFGIGTASLIAMGCIMVRQCHSNTCPVGVCVQDDKLRQKFVGTPEKVVNLFTFLAEEVREILAGLGFRSLNEVIGRTDLLHQVSRGAEHLDDLDLNPRLAQVDPGENARYCTLQGRNEVPDTLDARIVADARPLFEEGEKMQLAYNARNTQRAIGTRLSSMVTRKFGMFGLQPGHITIRLRGTAGQSLGAFAVQGIKLEVMGDANDYVGKGLSGGTIVVRPTTSSPLETNKNTIIGNTVLYGATAGKLFAAGQAGERFAVRNSGATVVVEGCGSNGCEYMTGGTAVILGRVGDNFAAGMTGGMAYVYDLDDSLPLYINDESVIFQRIEVGHYESQLKHLIEEHVTETQSRFAAEILNDWAREVTKFWQVVPKEMLNRLEVPVHLPKAISAE.

A propeptide spanning residues 1–36 (MTTELNQGEQFVADFRANAAALTTANAYNPEDEHDA) is cleaved from the precursor. Cys37 acts as the For GATase activity in catalysis. One can recognise a Glutamine amidotransferase type-2 domain in the interval 37–432 (CGVGFIAAID…PGEMIAVDLQ (396 aa)). Positions 916 to 937 (AKSDSGEGGEDPARFRPDKNGD) are disordered. Basic and acidic residues predominate over residues 926–936 (DPARFRPDKNG). FMN-binding positions include 1085-1142 (LSEV…IMVR) and 1086-1142 (SEVH…IMVR). Residues Cys1138, Cys1144, and Cys1149 each contribute to the [3Fe-4S] cluster site.

Belongs to the glutamate synthase family. Aggregate of 4 catalytic active heterodimers, consisting of a large and a small subunit. [3Fe-4S] cluster serves as cofactor. FAD is required as a cofactor. The cofactor is FMN.

It carries out the reaction 2 L-glutamate + NADP(+) = L-glutamine + 2-oxoglutarate + NADPH + H(+). The protein operates within amino-acid biosynthesis; L-glutamate biosynthesis via GLT pathway; L-glutamate from 2-oxoglutarate and L-glutamine (NADP(+) route): step 1/1. It functions in the pathway energy metabolism; nitrogen metabolism. This Azospirillum brasilense protein is Glutamate synthase [NADPH] large chain (gltB).